The primary structure comprises 156 residues: Small ribosomal subunit protein uS7 (156 aa).

This sequence belongs to the universal ribosomal protein uS7 family. Part of the 30S ribosomal subunit. Contacts proteins S9 and S11.

Its function is as follows. One of the primary rRNA binding proteins, it binds directly to 16S rRNA where it nucleates assembly of the head domain of the 30S subunit. Is located at the subunit interface close to the decoding center, probably blocks exit of the E-site tRNA. The sequence is that of Small ribosomal subunit protein uS7 from Desulforamulus reducens (strain ATCC BAA-1160 / DSM 100696 / MI-1) (Desulfotomaculum reducens).